Consider the following 481-residue polypeptide: Glutamate--tRNA ligase (481 aa).

A 'HIGH' region motif is present at residues 28–38; the sequence is PSPTGFLHLGG. Residues 139 to 148 are compositionally biased toward basic and acidic residues; the sequence is RYDGTWRPEP. The disordered stretch occupies residues 139–159; the sequence is RYDGTWRPEPGKTLPPVPADR. Positions 260–264 match the 'KMSKS' region motif; that stretch reads KLSKR. K263 serves as a coordination point for ATP.

Belongs to the class-I aminoacyl-tRNA synthetase family. Glutamate--tRNA ligase type 1 subfamily. In terms of assembly, monomer.

The protein localises to the cytoplasm. The enzyme catalyses tRNA(Glu) + L-glutamate + ATP = L-glutamyl-tRNA(Glu) + AMP + diphosphate. Its function is as follows. Catalyzes the attachment of glutamate to tRNA(Glu) in a two-step reaction: glutamate is first activated by ATP to form Glu-AMP and then transferred to the acceptor end of tRNA(Glu). In Bordetella bronchiseptica (strain ATCC BAA-588 / NCTC 13252 / RB50) (Alcaligenes bronchisepticus), this protein is Glutamate--tRNA ligase.